We begin with the raw amino-acid sequence, 554 residues long: 2-succinyl-5-enolpyruvyl-6-hydroxy-3-cyclohexene-1-carboxylate synthase (554 aa).

It belongs to the TPP enzyme family. MenD subfamily. In terms of assembly, homodimer. The cofactor is Mg(2+). Mn(2+) serves as cofactor. It depends on thiamine diphosphate as a cofactor.

The enzyme catalyses isochorismate + 2-oxoglutarate + H(+) = 5-enolpyruvoyl-6-hydroxy-2-succinyl-cyclohex-3-ene-1-carboxylate + CO2. It participates in quinol/quinone metabolism; 1,4-dihydroxy-2-naphthoate biosynthesis; 1,4-dihydroxy-2-naphthoate from chorismate: step 2/7. Its pathway is quinol/quinone metabolism; menaquinone biosynthesis. Functionally, catalyzes the thiamine diphosphate-dependent decarboxylation of 2-oxoglutarate and the subsequent addition of the resulting succinic semialdehyde-thiamine pyrophosphate anion to isochorismate to yield 2-succinyl-5-enolpyruvyl-6-hydroxy-3-cyclohexene-1-carboxylate (SEPHCHC). In Lactococcus lactis subsp. cremoris (strain SK11), this protein is 2-succinyl-5-enolpyruvyl-6-hydroxy-3-cyclohexene-1-carboxylate synthase.